Consider the following 766-residue polypeptide: Nucleolar complex protein 2 (766 aa).

Basic residues predominate over residues Met-1–Gly-12. Disordered regions lie at residues Met-1–Glu-73, Asp-100–Asp-154, and Lys-674–Trp-766. A compositionally biased stretch (basic and acidic residues) spans Ser-14 to Arg-29. Over residues Pro-33–Thr-42 the composition is skewed to polar residues. Basic residues predominate over residues Lys-58 to Ser-67. Positions Asp-100–Glu-115 are enriched in acidic residues. Residue Thr-101 is modified to Phosphothreonine. The span at Glu-130–Glu-140 shows a compositional bias: basic and acidic residues. The span at Val-141–Asp-154 shows a compositional bias: acidic residues. Phosphoserine is present on residues Ser-143, Ser-146, Ser-691, Ser-693, and Ser-705. Residues Asp-706 to Glu-720 are compositionally biased toward acidic residues. Over residues Ile-757–Trp-766 the composition is skewed to basic and acidic residues.

The protein belongs to the NOC2 family.

The protein resides in the nucleus. In Drosophila melanogaster (Fruit fly), this protein is Nucleolar complex protein 2.